The sequence spans 455 residues: Serine--tRNA ligase (455 aa).

Residue 252-254 (TAE) participates in L-serine binding. Residues 283-285 (RKE) and Val299 contribute to the ATP site. Glu306 lines the L-serine pocket. Position 370 to 373 (370 to 373 (EVVS)) interacts with ATP. Thr406 lines the L-serine pocket.

Belongs to the class-II aminoacyl-tRNA synthetase family. Type-1 seryl-tRNA synthetase subfamily. As to quaternary structure, homodimer. The tRNA molecule binds across the dimer.

It is found in the cytoplasm. The catalysed reaction is tRNA(Ser) + L-serine + ATP = L-seryl-tRNA(Ser) + AMP + diphosphate + H(+). It catalyses the reaction tRNA(Sec) + L-serine + ATP = L-seryl-tRNA(Sec) + AMP + diphosphate + H(+). The protein operates within aminoacyl-tRNA biosynthesis; selenocysteinyl-tRNA(Sec) biosynthesis; L-seryl-tRNA(Sec) from L-serine and tRNA(Sec): step 1/1. Functionally, catalyzes the attachment of serine to tRNA(Ser). Is also able to aminoacylate tRNA(Sec) with serine, to form the misacylated tRNA L-seryl-tRNA(Sec), which will be further converted into selenocysteinyl-tRNA(Sec). This is Serine--tRNA ligase from Pyrococcus furiosus (strain ATCC 43587 / DSM 3638 / JCM 8422 / Vc1).